We begin with the raw amino-acid sequence, 521 residues long: Protein NRT1/ PTR FAMILY 4.2 (521 aa).

Transmembrane regions (helical) follow at residues I30–V50, A65–I85, F89–L109, A133–L153, F172–L192, F204–F224, F297–L317, I338–Y358, I381–K401, I413–L433, I451–V471, and L498–A518.

Belongs to the major facilitator superfamily. Proton-dependent oligopeptide transporter (POT/PTR) (TC 2.A.17) family. As to expression, expressed in siliques.

The protein localises to the membrane. In terms of biological role, involved in abscisic acid transport. The polypeptide is Protein NRT1/ PTR FAMILY 4.2 (NPF4.2) (Arabidopsis thaliana (Mouse-ear cress)).